We begin with the raw amino-acid sequence, 342 residues long: Ketol-acid reductoisomerase (NADP(+)) (342 aa).

Residues 2–182 enclose the KARI N-terminal Rossmann domain; the sequence is AEMFYDDDAD…GGLRAGGIKT (181 aa). NADP(+) is bound by residues 25–28, Lys48, Ser51, Ser53, and 83–86; these read FGSQ and DHLQ. The active site involves His108. Gly134 serves as a coordination point for NADP(+). One can recognise a KARI C-terminal knotted domain in the interval 183-328; sequence TFTEETETDL…RELRKLMAWV (146 aa). Mg(2+) is bound by residues Asp191, Glu195, Glu227, and Glu231. Ser252 is a binding site for substrate.

The protein belongs to the ketol-acid reductoisomerase family. It depends on Mg(2+) as a cofactor.

The catalysed reaction is (2R)-2,3-dihydroxy-3-methylbutanoate + NADP(+) = (2S)-2-acetolactate + NADPH + H(+). It carries out the reaction (2R,3R)-2,3-dihydroxy-3-methylpentanoate + NADP(+) = (S)-2-ethyl-2-hydroxy-3-oxobutanoate + NADPH + H(+). It functions in the pathway amino-acid biosynthesis; L-isoleucine biosynthesis; L-isoleucine from 2-oxobutanoate: step 2/4. The protein operates within amino-acid biosynthesis; L-valine biosynthesis; L-valine from pyruvate: step 2/4. Its function is as follows. Involved in the biosynthesis of branched-chain amino acids (BCAA). Catalyzes an alkyl-migration followed by a ketol-acid reduction of (S)-2-acetolactate (S2AL) to yield (R)-2,3-dihydroxy-isovalerate. In the isomerase reaction, S2AL is rearranged via a Mg-dependent methyl migration to produce 3-hydroxy-3-methyl-2-ketobutyrate (HMKB). In the reductase reaction, this 2-ketoacid undergoes a metal-dependent reduction by NADPH to yield (R)-2,3-dihydroxy-isovalerate. The protein is Ketol-acid reductoisomerase (NADP(+)) of Kineococcus radiotolerans (strain ATCC BAA-149 / DSM 14245 / SRS30216).